Here is a 426-residue protein sequence, read N- to C-terminus: uncharacterized protein (426 aa).

The disordered stretch occupies residues 17-114 (KRDRPFSPDR…PDKKGEYIYP (98 aa)).

The protein localises to the plastid. This is an uncharacterized protein from Euglena longa (Euglenophycean alga).